The chain runs to 207 residues: LexA repressor (207 aa).

The H-T-H motif DNA-binding region spans 28–48 (RAEIARRLGFKSPNAAEEHLK). Catalysis depends on for autocatalytic cleavage activity residues serine 126 and lysine 163.

It belongs to the peptidase S24 family. Homodimer.

It catalyses the reaction Hydrolysis of Ala-|-Gly bond in repressor LexA.. In terms of biological role, represses a number of genes involved in the response to DNA damage (SOS response), including recA and lexA. In the presence of single-stranded DNA, RecA interacts with LexA causing an autocatalytic cleavage which disrupts the DNA-binding part of LexA, leading to derepression of the SOS regulon and eventually DNA repair. This chain is LexA repressor, found in Marinomonas sp. (strain MWYL1).